The sequence spans 210 residues: Thymidylate kinase (210 aa).

10–17 (GPDGAGKT) lines the ATP pocket.

Belongs to the thymidylate kinase family.

The catalysed reaction is dTMP + ATP = dTDP + ADP. Its function is as follows. Phosphorylation of dTMP to form dTDP in both de novo and salvage pathways of dTTP synthesis. The polypeptide is Thymidylate kinase (Geobacillus sp. (strain WCH70)).